The chain runs to 115 residues: Xenovulene A biosynthesis cluster protein asL2 (115 aa).

Its function is as follows. Part of the gene cluster that mediates the biosynthesis of xenovulene A, an unusual meroterpenoid that has potent inhibitory effects on the human gamma-aminobutyrate A (GABAA) benzodiazepine receptor. The first step of xenovulene A biosynthesis is the biosynthesis of 3-methylorcinaldehyde performed by the non-reducing polyketide synthase aspks1. The salicylate hydroxylase asL1 then catalyzes the oxidative dearomatization of 3-methylorcinaldehyde to yield a dearomatized hydroxycyclohexadione. The 2-oxoglutarate-dependent dioxygenase asL3 further catalyzes the oxidative ring expansion to provide the first tropolone metabolite. The cytochrome P450 monooxygenase asR2 allows the synthesis of tropolone hemiacetal. In parallel, a previously unrecognised class of terpene cyclase, asR6, produces alpha-humulene from farnesylpyrophosphate (FPP). The putative Diels-Alderase asR5 probably catalyzes the formation of the tropolone-humulene skeleton by linking humulene and the polyketide moiety. Oxidative-ring contractions catalyzed by asL4 and asL6 then processively remove carbon atoms from the polyketide to yield xenovulene A. The protein is Xenovulene A biosynthesis cluster protein asL2 of Sarocladium schorii (Acremonium strictum (strain IMI 501407)).